Here is a 232-residue protein sequence, read N- to C-terminus: RNA chaperone ProQ (232 aa).

Positions 105–182 (EAKARVQAQR…REEQHTPVSD (78 aa)) are disordered. Residues 117-136 (QQAKKREAAATAGEKEDAPR) show a composition bias toward basic and acidic residues. Residues 137 to 146 (RERKPRPTTP) show a composition bias toward basic residues. A compositionally biased stretch (basic and acidic residues) spans 147–177 (RRKEGAERKPRAQKPVEKAPKTVKAPREEQH).

The protein belongs to the ProQ family.

The protein resides in the cytoplasm. RNA chaperone with significant RNA binding, RNA strand exchange and RNA duplexing activities. May regulate ProP activity through an RNA-based, post-transcriptional mechanism. This chain is RNA chaperone ProQ, found in Escherichia coli (strain K12).